The following is a 166-amino-acid chain: MTKSFCSTGLRWLWLVVVVLIIDLGSKFLILQNFALGDTVPLFPSLNLHYARNYGAAFSFLADSGGWQRWFFAGIALGICLVLTVMMYRAKASQKLNNIAYALIIGGALGNLFDRLWHGFVVDMIDFYVGNWHFATFNLADSAICFGAAMIVLEGFLPNAAAKKQA.

Transmembrane regions (helical) follow at residues 12–32 (WLWL…LILQ), 70–90 (WFFA…MYRA), and 102–122 (ALII…GFVV). Residues Asp123 and Asp141 contribute to the active site. Residues 142 to 162 (SAICFGAAMIVLEGFLPNAAA) traverse the membrane as a helical segment.

This sequence belongs to the peptidase A8 family.

Its subcellular location is the cell inner membrane. The enzyme catalyses Release of signal peptides from bacterial membrane prolipoproteins. Hydrolyzes -Xaa-Yaa-Zaa-|-(S,diacylglyceryl)Cys-, in which Xaa is hydrophobic (preferably Leu), and Yaa (Ala or Ser) and Zaa (Gly or Ala) have small, neutral side chains.. The protein operates within protein modification; lipoprotein biosynthesis (signal peptide cleavage). Functionally, this protein specifically catalyzes the removal of signal peptides from prolipoproteins. The polypeptide is Lipoprotein signal peptidase (Enterobacter sp. (strain 638)).